The primary structure comprises 322 residues: Beta-ketoacyl-[acyl-carrier-protein] synthase III (322 aa).

Residues C113 and H249 contribute to the active site. Residues 250 to 254 are ACP-binding; the sequence is QANIR. The active site involves N279.

The protein belongs to the thiolase-like superfamily. FabH family. In terms of assembly, homodimer.

The protein localises to the cytoplasm. It catalyses the reaction malonyl-[ACP] + acetyl-CoA + H(+) = 3-oxobutanoyl-[ACP] + CO2 + CoA. It participates in lipid metabolism; fatty acid biosynthesis. Functionally, catalyzes the condensation reaction of fatty acid synthesis by the addition to an acyl acceptor of two carbons from malonyl-ACP. Catalyzes the first condensation reaction which initiates fatty acid synthesis and may therefore play a role in governing the total rate of fatty acid production. Possesses both acetoacetyl-ACP synthase and acetyl transacylase activities. Its substrate specificity determines the biosynthesis of branched-chain and/or straight-chain of fatty acids. This is Beta-ketoacyl-[acyl-carrier-protein] synthase III from Thioalkalivibrio sulfidiphilus (strain HL-EbGR7).